The sequence spans 86 residues: Large ribosomal subunit protein eL43 (86 aa).

The segment at 38–60 (CPFCGHKGKVYRLSTGVWACKKC) adopts a C4-type zinc-finger fold.

The protein belongs to the eukaryotic ribosomal protein eL43 family. It depends on Zn(2+) as a cofactor.

In Desulfurococcus amylolyticus (strain DSM 18924 / JCM 16383 / VKM B-2413 / 1221n) (Desulfurococcus kamchatkensis), this protein is Large ribosomal subunit protein eL43.